Here is a 129-residue protein sequence, read N- to C-terminus: Mediator of RNA polymerase II transcription subunit 31-B (129 aa).

It belongs to the Mediator complex subunit 31 family. Component of the Mediator complex.

The protein resides in the nucleus. In terms of biological role, component of the Mediator complex, a coactivator involved in the regulated transcription of nearly all RNA polymerase II-dependent genes. Mediator functions as a bridge to convey information from gene-specific regulatory proteins to the basal RNA polymerase II transcription machinery. Mediator is recruited to promoters by direct interactions with regulatory proteins and serves as a scaffold for the assembly of a functional preinitiation complex with RNA polymerase II and the general transcription factors. The polypeptide is Mediator of RNA polymerase II transcription subunit 31-B (med31-b) (Xenopus laevis (African clawed frog)).